Reading from the N-terminus, the 267-residue chain is N-formylglutamate deformylase (267 aa).

The protein belongs to the N-formylglutamate deformylase family. In terms of assembly, monomer.

It catalyses the reaction N-formyl-L-glutamate + H2O = formate + L-glutamate. It participates in amino-acid degradation; L-histidine degradation into L-glutamate; L-glutamate from N-formimidoyl-L-glutamate (deiminase route): step 2/2. Stimulated by Co(2+). Fe(2+) is also a good activator, particularly at lower concentrations, but it inhibits slightly the activity when used at concentrations over 0.1 mM. Other divalent metals tested (Cd(2+), Ca(2+), Mn(2+), Zn(2+), Ni(2+) and Mg(2+)) are not effective activators. Its function is as follows. Catalyzes the hydrolysis of N-formyl-L-glutamate to formate and L-glutamate. This is N-formylglutamate deformylase from Pseudomonas putida (Arthrobacter siderocapsulatus).